The sequence spans 1018 residues: Probable inorganic carbon transporter subunit DabA 2 (1018 aa).

Positions 489, 491, 674, and 689 each coordinate Zn(2+).

It belongs to the inorganic carbon transporter (TC 9.A.2) DabA family. As to quaternary structure, forms a complex with DabB. The cofactor is Zn(2+).

It localises to the cell inner membrane. Its function is as follows. Part of an energy-coupled inorganic carbon pump. The protein is Probable inorganic carbon transporter subunit DabA 2 of Sorangium cellulosum (strain So ce56) (Polyangium cellulosum (strain So ce56)).